The primary structure comprises 687 residues: Polyphosphate kinase (687 aa).

Asn-45 is a binding site for ATP. Positions 375 and 405 each coordinate Mg(2+). The Phosphohistidine intermediate role is filled by His-435. Tyr-472, Arg-568, and His-596 together coordinate ATP.

This sequence belongs to the polyphosphate kinase 1 (PPK1) family. It depends on Mg(2+) as a cofactor. An intermediate of this reaction is the autophosphorylated ppk in which a phosphate is covalently linked to a histidine residue through a N-P bond.

It carries out the reaction [phosphate](n) + ATP = [phosphate](n+1) + ADP. Catalyzes the reversible transfer of the terminal phosphate of ATP to form a long-chain polyphosphate (polyP). This chain is Polyphosphate kinase, found in Paraburkholderia phytofirmans (strain DSM 17436 / LMG 22146 / PsJN) (Burkholderia phytofirmans).